Reading from the N-terminus, the 295-residue chain is MRLIIVSGFSGSGKSIALDTLEDCGYYCIDNLPAPLIEPFLQQAIASRSSAFDKIAIGIDARNQSANLTGFPDILGRARQLGVDCRILFLQAEPETLLKRFSETRRKHPLTDASVPLAEAIELERHLLEPVLSRADLHIDTTYTTIHQLRELVRQRVGIPSGGLMSLCLQSFGFKHGVPMDTDFVFDARCLPNPHWTASLRPKTGKDPEVVAFLAESADVHDYLNHLTAFLERWIPCFLAENRSYLNVSIGCTGGQHRSVYLVEALAGRLNSDRYNLLVRHRELPEPAEESHGTK.

Gly8 to Ser15 contacts ATP. Asp60–Asn63 serves as a coordination point for GTP.

It belongs to the RapZ-like family.

Displays ATPase and GTPase activities. This Methylococcus capsulatus (strain ATCC 33009 / NCIMB 11132 / Bath) protein is Nucleotide-binding protein MCA0739.